The primary structure comprises 422 residues: Tyrosine--tRNA ligase (422 aa).

L-tyrosine is bound at residue Y36. Residues 41–50 (PTADSLHIGH) carry the 'HIGH' region motif. L-tyrosine is bound by residues Y175 and Q179. The 'KMSKS' region signature appears at 235 to 239 (KFGKT). K238 is an ATP binding site. An S4 RNA-binding domain is found at 354–411 (TSLQEALTKSKLATSRSQARYFIKSNAITINAHKQSKIEYIFQDSDRIYNLYTLLKRG).

Belongs to the class-I aminoacyl-tRNA synthetase family. TyrS type 1 subfamily. As to quaternary structure, homodimer.

It is found in the cytoplasm. The enzyme catalyses tRNA(Tyr) + L-tyrosine + ATP = L-tyrosyl-tRNA(Tyr) + AMP + diphosphate + H(+). Catalyzes the attachment of tyrosine to tRNA(Tyr) in a two-step reaction: tyrosine is first activated by ATP to form Tyr-AMP and then transferred to the acceptor end of tRNA(Tyr). The sequence is that of Tyrosine--tRNA ligase from Blochmanniella floridana.